A 266-amino-acid chain; its full sequence is Enterotoxin type C-2 (266 aa).

The N-terminal stretch at 1–27 (MNKSRFISCVILIFALILVLFTPNVLA) is a signal peptide. Residues Asp36, His74, Glu98, Glu107, and Asp110 each coordinate Zn(2+). Cys120 and Cys137 are oxidised to a cystine. Zn(2+) contacts are provided by His145, Glu146, and His149.

This sequence belongs to the staphylococcal/streptococcal toxin family. As to quaternary structure, interacts with host MHC class II molecules composed of alpha/HLA-DRA and beta/HLA-DRB1 chains. Requires Zn(2+) as cofactor.

It is found in the secreted. Staphylococcal enterotoxin that activates the host immune system by binding as unprocessed molecules to major histocompatibility (MHC) complex class II and T-cell receptor (TCR) molecules. In turn, this ternary complex activates a large number of T-lymphocytes initiating a systemic release of pro-inflammatory cytokines. Also causes the intoxication staphylococcal food poisoning syndrome. In Staphylococcus aureus, this protein is Enterotoxin type C-2 (entC2).